The chain runs to 317 residues: Mitochondrial thiamine pyrophosphate carrier 1 (317 aa).

Helical transmembrane passes span 15–37, 80–100, 118–138, 168–190, 205–227, and 281–300; these read TVSW…MATA, IPAT…YSWF, LTVG…LDLL, GFFT…MFLT, FWSR…TMVF, and GLTM…LFVY. Solcar repeat units follow at residues 16-103, 112-197, and 206-306; these read VSWY…FNNV, SQQG…VNIV, and WSRP…TMDL.

It belongs to the mitochondrial carrier (TC 2.A.29) family.

It localises to the mitochondrion inner membrane. Functionally, mitochondrial transporter that mediates uptake of thiamine pyrophosphate (ThPP) into mitochondria. This Kluyveromyces lactis (strain ATCC 8585 / CBS 2359 / DSM 70799 / NBRC 1267 / NRRL Y-1140 / WM37) (Yeast) protein is Mitochondrial thiamine pyrophosphate carrier 1 (TPC1).